The sequence spans 79 residues: RNA-binding protein Hfq (79 aa).

In terms of domain architecture, Sm spans aspartate 10 to valine 70.

This sequence belongs to the Hfq family. Homohexamer.

RNA chaperone that binds small regulatory RNA (sRNAs) and mRNAs to facilitate mRNA translational regulation in response to envelope stress, environmental stress and changes in metabolite concentrations. Also binds with high specificity to tRNAs. The chain is RNA-binding protein Hfq from Bartonella quintana (strain Toulouse) (Rochalimaea quintana).